Here is a 314-residue protein sequence, read N- to C-terminus: Carbamate kinase (314 aa).

The protein belongs to the carbamate kinase family. In terms of assembly, homodimer.

Its subcellular location is the cytoplasm. It catalyses the reaction hydrogencarbonate + NH4(+) + ATP = carbamoyl phosphate + ADP + H2O + H(+). In terms of biological role, carbamate kinase that plays a biosynthetic role in that it produces carbamoyl-phosphate. The sequence is that of Carbamate kinase (cpkA) from Pyrococcus furiosus (strain ATCC 43587 / DSM 3638 / JCM 8422 / Vc1).